Reading from the N-terminus, the 205-residue chain is uncharacterized protein (205 aa).

5 consecutive transmembrane segments (helical) span residues 5–25 (VWLA…SGTV), 41–61 (GAII…GIGI), 68–88 (SALA…WLGI), 117–137 (LINL…PQFI), and 147–167 (FLVL…GYTA).

It belongs to the Rht family.

It localises to the cell inner membrane. Its function is as follows. Involved in positive regulation of motility and negative regulation of biofilm formation. This is an uncharacterized protein from Vibrio cholerae serotype O1 (strain ATCC 39315 / El Tor Inaba N16961).